We begin with the raw amino-acid sequence, 436 residues long: Adenosylhomocysteinase (436 aa).

The substrate site is built by T62, D136, and E161. NAD(+) is bound at residue 162-164 (TTT). Substrate-binding residues include K191 and D195. Residues N196, 225–230 (GFGDVG), E248, N283, 304–306 (IGH), and N352 each bind NAD(+).

Belongs to the adenosylhomocysteinase family. NAD(+) is required as a cofactor.

The protein localises to the cytoplasm. It carries out the reaction S-adenosyl-L-homocysteine + H2O = L-homocysteine + adenosine. Its pathway is amino-acid biosynthesis; L-homocysteine biosynthesis; L-homocysteine from S-adenosyl-L-homocysteine: step 1/1. May play a key role in the regulation of the intracellular concentration of adenosylhomocysteine. In Leptospira interrogans serogroup Icterohaemorrhagiae serovar copenhageni (strain Fiocruz L1-130), this protein is Adenosylhomocysteinase.